Consider the following 204-residue polypeptide: Probable peptidyl-tRNA hydrolase (204 aa).

The active-site Proton acceptor is the H36. TRNA contacts are provided by N86 and N132.

Belongs to the PTH family.

It carries out the reaction an N-acyl-L-alpha-aminoacyl-tRNA + H2O = an N-acyl-L-amino acid + a tRNA + H(+). Its function is as follows. Peptidyl-tRNA hydrolase that cleaves nascent chains-tRNAs that are not stably fixed in the P-site of 60S ribosome-nascent chain complexes. Acts downstream of the ribosome-associated quality control (RQC) pathway to release non-ubiquitinated nascent chains from 60S and 80S ribosome-nascent chain complexes. Does not act on ubiquitinated nascent chains, which are cleaved by ANKZF1 for degradation. In Mus musculus (Mouse), this protein is Probable peptidyl-tRNA hydrolase.